The chain runs to 1130 residues: Alpha-mannosidase 2 (1130 aa).

Over 1 to 14 the chain is Cytoplasmic; that stretch reads MRTRVLRCRPFSTR. Residues 15 to 35 traverse the membrane as a helical; Signal-anchor for type II membrane protein segment; it reads ILLLLLFVLAFGVYCYFYNAS. Over 36–1130 the chain is Lumenal; that stretch reads PQNYNKPRIS…MEVKTYKIRF (1095 aa). Asn117 is a glycosylation site (N-linked (GlcNAc...) asparagine). Residues His133 and Asp135 each coordinate Zn(2+). N-linked (GlcNAc...) asparagine glycosylation is present at Asn166. Zn(2+) is bound by residues Asp247 and His527. Residue Asp247 is the Nucleophile of the active site. Asn622, Asn683, Asn1056, and Asn1095 each carry an N-linked (GlcNAc...) asparagine glycan.

The protein belongs to the glycosyl hydrolase 38 family. In terms of assembly, homodimer; disulfide-linked. Requires Zn(2+) as cofactor. Post-translationally, N-glycosylated.

Its subcellular location is the microsome membrane. The protein localises to the golgi apparatus membrane. The enzyme catalyses N(4)-{beta-D-GlcNAc-(1-&gt;2)-alpha-D-Man-(1-&gt;3)-[alpha-D-Man-(1-&gt;3)-[alpha-D-Man-(1-&gt;6)]-alpha-D-Man-(1-&gt;6)]-beta-D-Man-(1-&gt;4)-beta-D-GlcNAc-(1-&gt;4)-beta-D-GlcNAc}-L-asparaginyl-[protein] + 2 H2O = 2 alpha-D-mannopyranose + an N(4)-{beta-D-GlcNAc-(1-&gt;2)-alpha-D-Man-(1-&gt;3)-[alpha-D-Man-(1-&gt;6)]-beta-D-Man-(1-&gt;4)-beta-D-GlcNAc-(1-&gt;4)-beta-D-GlcNAc}-L-asparaginyl-[protein]. It participates in protein modification; protein glycosylation. Its activity is regulated as follows. Inhibited by swainsonine. Functionally, catalyzes the first committed step in the biosynthesis of complex N-glycans. It controls conversion of high mannose to complex N-glycans; the final hydrolytic step in the N-glycan maturation pathway. This chain is Alpha-mannosidase 2, found in Spodoptera frugiperda (Fall armyworm).